We begin with the raw amino-acid sequence, 154 residues long: MMGGGQQQQLQQLSEELQAIDEEIDELREEVDDLQSEQTSIDEAMDAIQTLESGATVQVPLGGDAYVRAEIQDADEIIVGLGADFAAEQSADNAVESLSTKQDALDNRIESLRDDIDELETESSQLEQQAQQMQQQMQQQQMQQMQDQQPEDNE.

The segment covering Asp92–Gln102 has biased composition (polar residues). Residues Asp92 to Glu154 are disordered. The span at Asp103 to Asp114 shows a compositional bias: basic and acidic residues. Residues Gln128–Gln148 are compositionally biased toward low complexity.

Belongs to the prefoldin subunit alpha family. Heterohexamer of two alpha and four beta subunits.

It localises to the cytoplasm. In terms of biological role, molecular chaperone capable of stabilizing a range of proteins. Seems to fulfill an ATP-independent, HSP70-like function in archaeal de novo protein folding. The protein is Prefoldin subunit alpha of Haloquadratum walsbyi (strain DSM 16790 / HBSQ001).